We begin with the raw amino-acid sequence, 497 residues long: Protein root UVB sensitive 6 (497 aa).

It belongs to the RUS1 family.

Its function is as follows. Required for normal embryo development. This is Protein root UVB sensitive 6 from Arabidopsis thaliana (Mouse-ear cress).